A 331-amino-acid polypeptide reads, in one-letter code: Small ribosomal subunit protein uS2 (331 aa).

Belongs to the universal ribosomal protein uS2 family.

The polypeptide is Small ribosomal subunit protein uS2 (Bradyrhizobium diazoefficiens (strain JCM 10833 / BCRC 13528 / IAM 13628 / NBRC 14792 / USDA 110)).